The sequence spans 359 residues: MENKKVIVGISGGVDSSVSALLLKQQGYDVTGVFMKNWEEDDTDEFCSAEQDIADAQAVCDSIGIPFKKINFAAEYWDNVFEHFLIKYKAGRTPNPDILCNKEIKFKAFLSYVHLLGGDYIATGHYAQTRLAADGSVQLVKGLDDNKDQTYFLYTLGQEQLRQTIFPIGNIEKSKVREIAKENNLVTFDKKDSTGICFIGERKFKEFLSKYLPAQKGEIHDENGIKIGMHDGLMYYTIGQRQGLGIGGVKDRPEVPWFAAKKDLENNVLIAVQGHDHPLLFKQSLQAIELSWVAGMAPADKFRCAAKVRYRQKDQSCEVEVNQDGSVNVTFDQPQRAITPGQSVVFYIDDVCLGGGVII.

ATP is bound by residues glycine 9 to serine 16 and methionine 35. Residues asparagine 95–aspartate 97 form an interaction with target base in tRNA region. The Nucleophile role is filled by cysteine 100. Cysteines 100 and 197 form a disulfide. Glycine 124 is a binding site for ATP. The interaction with tRNA stretch occupies residues lysine 147–glutamine 149. Residue cysteine 197 is the Cysteine persulfide intermediate of the active site. The tract at residues arginine 309 to tyrosine 310 is interaction with tRNA.

This sequence belongs to the MnmA/TRMU family.

Its subcellular location is the cytoplasm. It carries out the reaction S-sulfanyl-L-cysteinyl-[protein] + uridine(34) in tRNA + AH2 + ATP = 2-thiouridine(34) in tRNA + L-cysteinyl-[protein] + A + AMP + diphosphate + H(+). Functionally, catalyzes the 2-thiolation of uridine at the wobble position (U34) of tRNA, leading to the formation of s(2)U34. In Francisella tularensis subsp. tularensis (strain WY96-3418), this protein is tRNA-specific 2-thiouridylase MnmA.